The primary structure comprises 445 residues: UPF0210 protein STK_02450 (445 aa).

Belongs to the UPF0210 family.

The polypeptide is UPF0210 protein STK_02450 (Sulfurisphaera tokodaii (strain DSM 16993 / JCM 10545 / NBRC 100140 / 7) (Sulfolobus tokodaii)).